The chain runs to 372 residues: UDP-2-acetamido-2,6-beta-L-arabino-hexul-4-ose reductase (372 aa).

Residues 7–30 (GANGFVGRNLCAHLAERGGIEVVP), Leu53, Tyr103, and Lys107 each bind NAD(+). Catalysis depends on Tyr103, which acts as the Proton acceptor. Residues Asn132 and 279-282 (HPGV) each bind substrate.

The protein belongs to the NAD(P)-dependent epimerase/dehydratase family. Homodimer.

It catalyses the reaction UDP-2-acetamido-2,6-dideoxy-beta-L-arabino-hex-4-ulose + NADH + H(+) = UDP-2-acetamido-2,6-dideoxy-beta-L-talose + NAD(+). The catalysed reaction is UDP-2-acetamido-2,6-dideoxy-beta-L-arabino-hex-4-ulose + NADPH + H(+) = UDP-2-acetamido-2,6-dideoxy-beta-L-talose + NADP(+). It functions in the pathway bacterial outer membrane biogenesis; LPS O-antigen biosynthesis. Functionally, bifunctional enzyme that mediates C-3 epimerization of the second intermediate followed by reduction at C-4 during serogroup O11 O-antigen biosynthesis, thus catalyzing the conversion of UDP-N-acetyl-D-glucosamine to precursors for the biosynthesis of O antigen. This is UDP-2-acetamido-2,6-beta-L-arabino-hexul-4-ose reductase from Pseudomonas aeruginosa (strain ATCC 29260 / BCRC 12902 / CIP 102967 / NCIMB 11965 / PA103).